The sequence spans 352 residues: MHVPIRLLEWFKVEQTLVIQKKKRFGFSQGIGITLLIAIVAKYLAELPFLNIMGQLVIAILIGMVWRAAIGVPHDAIAGTNFASKKLLRFGIILLGMRLNLVDIAKAGPKVLVIAAVVITFTIFVVYGLTKVFKVEKKLGILTACGTAICGAAAVVAIAPQVKAKDDETAVGAAIIAILGTIFTLIYTLLYPVLGLSPYGYGVFSGATLHEIAHVIAAAAPGGSAAVDIAVIVKLTRVAMLVPVAILIGLWFGKSEGSKEKRSWRDLPIPWFIFGFLAMSAVHSLGIIPEVVAGYIVVIAYMLIAMAMAGLGLNVEFKTFRKLGSKAFVAGLIGSVCLSVLGYVLVYALGFM.

10 helical membrane-spanning segments follow: residues 25–47, 52–71, 111–130, 140–162, 169–191, 201–223, 230–252, 267–289, 291–313, and 328–350; these read FGFS…LAEL, IMGQ…AAIG, VLVI…YGLT, GILT…APQV, TAVG…TLLY, YGVF…APGG, AVIV…GLWF, LPIP…GIIP, VVAG…GLGL, and FVAG…YALG.

This sequence belongs to the UPF0324 family.

It localises to the cell membrane. The polypeptide is UPF0324 membrane protein BCE_5279 (Bacillus cereus (strain ATCC 10987 / NRS 248)).